The following is a 229-amino-acid chain: Flagellar calcium-binding protein TB-1.7G (229 aa).

Residues 1 to 25 (GSKNASNPKDGAASKGGKDGKTTAD) are disordered. Residues 16–25 (GGKDGKTTAD) show a composition bias toward basic and acidic residues. EF-hand domains lie at 44–79 (ESKS…ILKL), 80–115 (DEFT…LVEF), 126–161 (YDIF…LKEW), and 163–198 (VDIT…KKLQ). 5 residues coordinate Ca(2+): Asp-57, Asn-59, Thr-61, Lys-63, and Glu-68. Residues Asp-139, Asp-141, Ser-143, Glu-150, Asp-176, Asn-178, Ser-180, and Glu-187 each contribute to the Ca(2+) site. The tract at residues 202–229 (DPDDEENGANEGDGANAGDGVPAAEGSA) is disordered. Low complexity predominate over residues 210–221 (ANEGDGANAGDG).

This sequence belongs to the calflagin family.

Its subcellular location is the cell projection. It localises to the cilium. It is found in the flagellum. May contribute to the rapid motility of the trypanosomes, playing a role either in flagellar structure or in calcium metabolism. Could alternate between a GDP-bound inactive form to a calcium/GTP-bound active form. The chain is Flagellar calcium-binding protein TB-1.7G from Trypanosoma brucei brucei.